The sequence spans 234 residues: Large ribosomal subunit protein uL1 (234 aa).

The protein belongs to the universal ribosomal protein uL1 family. Part of the 50S ribosomal subunit.

In terms of biological role, binds directly to 23S rRNA. The L1 stalk is quite mobile in the ribosome, and is involved in E site tRNA release. Protein L1 is also a translational repressor protein, it controls the translation of the L11 operon by binding to its mRNA. In Anaeromyxobacter dehalogenans (strain 2CP-1 / ATCC BAA-258), this protein is Large ribosomal subunit protein uL1.